Reading from the N-terminus, the 206-residue chain is Protein GET1 (206 aa).

Topologically, residues 1–4 are lumenal; sequence MPSL. Residues 5–24 form a helical membrane-spanning segment; the sequence is LITILLLNIVIYVINTIGAA. Residues 25 to 110 lie on the Cytoplasmic side of the membrane; it reads TIDSLLWLFY…SFDMTVKSVR (86 aa). A coiled-coil region spans residues 42-99; it reads SHMAREQRRLKREVIQLKREMNATSSQDEFAKWAKLRRRHDKALETYEAKNNELTQCK. Residues 111–131 traverse the membrane as a helical segment; sequence WAATSGLMLFLQFWYSKRPIF. Residues 132-155 lie on the Lumenal side of the membrane; it reads TLPPGWIPWQVQWVLSFPRAPMGT. Residues 156–172 traverse the membrane as a helical segment; that stretch reads VSIQIWGGACATVVALV. Residues 173 to 206 lie on the Cytoplasmic side of the membrane; the sequence is GDAVGATMGFVSASKKEGMKVGAGVGEKEGKKSQ.

The protein belongs to the WRB/GET1 family. As to quaternary structure, interacts with GET3.

Its subcellular location is the endoplasmic reticulum membrane. Its function is as follows. Required for the post-translational delivery of tail-anchored (TA) proteins to the endoplasmic reticulum. Acts as a membrane receptor for soluble GET3, which recognizes and selectively binds the transmembrane domain of TA proteins in the cytosol. This Ajellomyces dermatitidis (strain ER-3 / ATCC MYA-2586) (Blastomyces dermatitidis) protein is Protein GET1.